We begin with the raw amino-acid sequence, 66 residues long: Period circadian protein (66 aa).

Residues 1 to 66 are disordered; sequence EGSGGSGSSG…VTLTESLLNK (66 aa). A compositionally biased stretch (low complexity) spans 9 to 31; that stretch reads SGNFTTGSNIHMSSVTNTSNAGT. Tandem repeats lie at residues 30-31, 32-33, 35-36, and 37-38. The segment at 30 to 53 is 4 X 2 AA tandem repeats of G-[TN]; that stretch reads GTGTSGTGNSGGGSGGGTGPGSGA. A compositionally biased stretch (gly residues) spans 32–51; that stretch reads GTSGTGNSGGGSGGGTGPGS.

Forms a heterodimer with timeless (TIM); the complex then translocates into the nucleus. In terms of processing, phosphorylated with a circadian rhythmicity, probably by the double-time protein (dbt). Phosphorylation could be implicated in the stability of per monomer and in the formation of heterodimer per-tim.

The protein localises to the nucleus. Its subcellular location is the cytoplasm. It localises to the perinuclear region. Essential for biological clock functions. Determines the period length of circadian and ultradian rhythms; an increase in PER dosage leads to shortened circadian rhythms and a decrease leads to lengthened circadian rhythms. Essential for the circadian rhythmicity of locomotor activity, eclosion behavior, and for the rhythmic component of the male courtship song that originates in the thoracic nervous system. The biological cycle depends on the rhythmic formation and nuclear localization of the TIM-PER complex. Light induces the degradation of TIM, which promotes elimination of PER. Nuclear activity of the heterodimer coordinatively regulates PER and TIM transcription through a negative feedback loop. Behaves as a negative element in circadian transcriptional loop. Does not appear to bind DNA, suggesting indirect transcriptional inhibition. This chain is Period circadian protein (per), found in Drosophila saltans (Fruit fly).